Reading from the N-terminus, the 294-residue chain is tRNA dimethylallyltransferase (294 aa).

An ATP-binding site is contributed by 10 to 17 (GPTAVGKT). Substrate is bound at residue 12 to 17 (TAVGKT). The tract at residues 35–38 (DSQQ) is interaction with substrate tRNA.

The protein belongs to the IPP transferase family. In terms of assembly, monomer. Requires Mg(2+) as cofactor.

It carries out the reaction adenosine(37) in tRNA + dimethylallyl diphosphate = N(6)-dimethylallyladenosine(37) in tRNA + diphosphate. Catalyzes the transfer of a dimethylallyl group onto the adenine at position 37 in tRNAs that read codons beginning with uridine, leading to the formation of N6-(dimethylallyl)adenosine (i(6)A). The protein is tRNA dimethylallyltransferase of Streptococcus pneumoniae (strain Hungary19A-6).